The primary structure comprises 754 residues: 5-methyltetrahydropteroyltriglutamate--homocysteine methyltransferase (754 aa).

5-methyltetrahydropteroyltri-L-glutamate-binding positions include Arg19–Lys22 and Lys121. Residues Ile423–Ser425 and Glu476 contribute to the L-homocysteine site. L-methionine is bound by residues Ile423–Ser425 and Glu476. Residues Arg507–Cys508 and Trp553 contribute to the 5-methyltetrahydropteroyltri-L-glutamate site. Asp591 serves as a coordination point for L-homocysteine. Asp591 is a binding site for L-methionine. A 5-methyltetrahydropteroyltri-L-glutamate-binding site is contributed by Glu597. Positions 633, 635, and 657 each coordinate Zn(2+). The active-site Proton donor is His686. Cys718 contacts Zn(2+).

Belongs to the vitamin-B12 independent methionine synthase family. It depends on Zn(2+) as a cofactor.

It catalyses the reaction 5-methyltetrahydropteroyltri-L-glutamate + L-homocysteine = tetrahydropteroyltri-L-glutamate + L-methionine. It participates in amino-acid biosynthesis; L-methionine biosynthesis via de novo pathway; L-methionine from L-homocysteine (MetE route): step 1/1. Its function is as follows. Catalyzes the transfer of a methyl group from 5-methyltetrahydrofolate to homocysteine resulting in methionine formation. This Corynebacterium efficiens (strain DSM 44549 / YS-314 / AJ 12310 / JCM 11189 / NBRC 100395) protein is 5-methyltetrahydropteroyltriglutamate--homocysteine methyltransferase.